Consider the following 165-residue polypeptide: Secreted acidic protein 2 (165 aa).

2 stretches are compositionally biased toward acidic residues: residues 1–58 (WSXS…DDSG) and 80–102 (ESSD…DAYN). Positions 1–112 (WSXSGDDDDD…DDSQAGELNS (112 aa)) are disordered. The segment covering 103–112 (DDSQAGELNS) has biased composition (polar residues).

In terms of tissue distribution, component of the acid-insoluble and acid-soluble organic matrix of the aragonitic skeleton (at protein level).

The protein localises to the secreted. This is Secreted acidic protein 2 from Acropora millepora (Staghorn coral).